We begin with the raw amino-acid sequence, 812 residues long: Lon protease (812 aa).

The region spanning 12–205 (LPMLPLRGVL…YLCELLAKEM (194 aa)) is the Lon N-terminal domain. 357–364 (GPPGVGKT) lines the ATP pocket. The 182-residue stretch at 593–774 (ENQVGVATGL…DEVLEETLLK (182 aa)) folds into the Lon proteolytic domain. Residues serine 680 and lysine 723 contribute to the active site.

It belongs to the peptidase S16 family. In terms of assembly, homohexamer. Organized in a ring with a central cavity.

The protein localises to the cytoplasm. It catalyses the reaction Hydrolysis of proteins in presence of ATP.. ATP-dependent serine protease that mediates the selective degradation of mutant and abnormal proteins as well as certain short-lived regulatory proteins. Required for cellular homeostasis and for survival from DNA damage and developmental changes induced by stress. Degrades polypeptides processively to yield small peptide fragments that are 5 to 10 amino acids long. Binds to DNA in a double-stranded, site-specific manner. This chain is Lon protease, found in Syntrophomonas wolfei subsp. wolfei (strain DSM 2245B / Goettingen).